The chain runs to 200 residues: dITP/XTP pyrophosphatase (200 aa).

7 to 12 (TQNKRK) contributes to the substrate binding site. Mg(2+) contacts are provided by glutamate 42 and aspartate 71. Catalysis depends on aspartate 71, which acts as the Proton acceptor. Residues serine 72, 156 to 159 (FGYD), lysine 179, and 184 to 185 (HR) each bind substrate.

It belongs to the HAM1 NTPase family. As to quaternary structure, homodimer. It depends on Mg(2+) as a cofactor.

It catalyses the reaction XTP + H2O = XMP + diphosphate + H(+). It carries out the reaction dITP + H2O = dIMP + diphosphate + H(+). The enzyme catalyses ITP + H2O = IMP + diphosphate + H(+). Pyrophosphatase that catalyzes the hydrolysis of nucleoside triphosphates to their monophosphate derivatives, with a high preference for the non-canonical purine nucleotides XTP (xanthosine triphosphate), dITP (deoxyinosine triphosphate) and ITP. Seems to function as a house-cleaning enzyme that removes non-canonical purine nucleotides from the nucleotide pool, thus preventing their incorporation into DNA/RNA and avoiding chromosomal lesions. The sequence is that of dITP/XTP pyrophosphatase from Malacoplasma penetrans (strain HF-2) (Mycoplasma penetrans).